Here is a 338-residue protein sequence, read N- to C-terminus: MNLQKFSRYPLTFGPTPIQPLKRLSAHLGGKVELYAKRDDCNSGLAFGGNKTRKLEYLIPDALAQGCDTLVSIGGIQSNQTRQVAAVAAHLGMKCVLVQENWVNYHDAVYDRVGNIQMSRMMGADVRLVPDGFDIGFRKSWEDALADVRARGGKPYAIPAGCSDHPLGGLGFVGFAEEVRAQEAELGFQFDYVVVCSVTGSTQAGMVVGFAADGRADRVIGVDASAKPAQTREQILRIAKHTADRVELGRDITSADVVLDERFGGPEYGLPNEGTLEAIRLCAKLEGVLTDPVYEGKSMHGMIEKVRLGEFPAGSKVLYAHLGGVPALNAYSFLFRDG.

K51 carries the N6-(pyridoxal phosphate)lysine modification. S78 (nucleophile) is an active-site residue.

It belongs to the ACC deaminase/D-cysteine desulfhydrase family. As to quaternary structure, homotrimer. Requires pyridoxal 5'-phosphate as cofactor.

The enzyme catalyses 1-aminocyclopropane-1-carboxylate + H2O = 2-oxobutanoate + NH4(+). In terms of biological role, catalyzes a cyclopropane ring-opening reaction, the irreversible conversion of 1-aminocyclopropane-1-carboxylate (ACC) to ammonia and alpha-ketobutyrate. Allows growth on ACC as a nitrogen source. The chain is 1-aminocyclopropane-1-carboxylate deaminase from Burkholderia pseudomallei (strain 1106a).